We begin with the raw amino-acid sequence, 347 residues long: MNPLIFTMILLTVMLGTAIVMTTSHWVMAWIGFEMNMLAVIPILMKKYNPRSMEASTKYFLTQATASMLLMLAIVINLVYSGQWSMTKPLTSTTSIIMTLALAMKLGLAPFHFWVPEVTQGVQLSSGLILLTWQKLAPMSILYQISPTINLDLLLLMSLLSILVGGWGGLNQTQLRKIMAYSSIAHMGWMTAIMVYNPTMALLNLVIYILLTTTTFMMLMMNSSTTTLSLSHMWNKTPLLTTAILTIMLSLGGLPPLSGFTPKWMIIQELTKNDNMIMPTIMAVMALLNLYFYMRLTYSTSLTMFPSTNNMKIKWQFSHKKPTANLSPLIILSTLILPLSPMLALLE.

11 helical membrane-spanning segments follow: residues 3 to 23, 25 to 45, 59 to 79, 96 to 116, 122 to 142, 149 to 169, 178 to 198, 200 to 220, 240 to 260, 276 to 296, and 326 to 346; these read PLIF…VMTT, HWVM…PILM, YFLT…INLV, IIMT…FWVP, VQLS…MSIL, INLD…GWGG, IMAY…VYNP, MALL…MMLM, LTTA…LSGF, MIMP…YMRL, and LSPL…LALL.

It belongs to the complex I subunit 2 family. As to quaternary structure, core subunit of respiratory chain NADH dehydrogenase (Complex I) which is composed of 45 different subunits. Interacts with TMEM242.

The protein localises to the mitochondrion inner membrane. The enzyme catalyses a ubiquinone + NADH + 5 H(+)(in) = a ubiquinol + NAD(+) + 4 H(+)(out). Its function is as follows. Core subunit of the mitochondrial membrane respiratory chain NADH dehydrogenase (Complex I) which catalyzes electron transfer from NADH through the respiratory chain, using ubiquinone as an electron acceptor. Essential for the catalytic activity and assembly of complex I. The sequence is that of NADH-ubiquinone oxidoreductase chain 2 from Nyctimene albiventer (Common tube-nosed fruit bat).